We begin with the raw amino-acid sequence, 249 residues long: Photosystem I-associated linker protein CpcL (249 aa).

A PBS-linker domain is found at 11–189 (VSQNQRVTNY…PRYGADHREK (179 aa)). A helical transmembrane segment spans residues 223–247 (VVLYVGGALVSLGIIAVALSAWGII).

Belongs to the phycobilisome linker protein family. Part of a specialized phycobilisome (PBS), a structure that is usually composed of two distinct substructures: a core complex and a number of rods radiating from the core. This protein is part of a core-less PBS rod (called CpcL-PBS) with on average 5 stacked phycocyanin hexamers (PC, CpcA and CpcB). Linker CpcL connects the PC stack to the thylakoid, the hexamers are linked by 1 copy of CpcC1, 3 copies of CpcC2 and the stack is terminated by a single copy of CpcD. Ferredoxin--NADP reductase (petH) is also part of the complex. CpcL-PBS has no central core proteins (allophycocyanin ApcA, ApcB) nor phycobiliprotein ApcE.

The protein localises to the cellular thylakoid membrane. In terms of biological role, rod linker protein, associated with phycocyanin. Linker polypeptides determine the state of aggregation and the location of the disk-shaped phycobiliprotein units within the phycobilisome and modulate their spectroscopic properties in order to mediate a directed and optimal energy transfer. Plays a role in energy transfer from the phycobilisome to photosystem I (PSI). Although able to transfer energy to both photosystems, this is predominantly a PSI antenna. The sequence is that of Photosystem I-associated linker protein CpcL from Synechocystis sp. (strain ATCC 27184 / PCC 6803 / Kazusa).